Consider the following 470-residue polypeptide: Serine hydroxymethyltransferase 5 (470 aa).

K244 bears the N6-(pyridoxal phosphate)lysine mark.

This sequence belongs to the SHMT family. In terms of assembly, homotetramer. Requires pyridoxal 5'-phosphate as cofactor.

It is found in the cytoplasm. The enzyme catalyses (6R)-5,10-methylene-5,6,7,8-tetrahydrofolate + glycine + H2O = (6S)-5,6,7,8-tetrahydrofolate + L-serine. The protein operates within one-carbon metabolism; tetrahydrofolate interconversion. In terms of biological role, catalyzes the interconversion of serine and glycine. The polypeptide is Serine hydroxymethyltransferase 5 (SHM5) (Arabidopsis thaliana (Mouse-ear cress)).